We begin with the raw amino-acid sequence, 569 residues long: Undecaprenyl phosphate-alpha-4-amino-4-deoxy-L-arabinose arabinosyl transferase 1 (569 aa).

The next 12 helical transmembrane spans lie at Gly-27–Ile-47, Leu-98–Ala-120, Ile-129–Tyr-149, Asn-151–Ile-171, Leu-194–Leu-214, Tyr-225–His-245, Pro-275–Pro-295, Ala-311–Leu-331, Tyr-334–Leu-354, Gly-366–Thr-386, Phe-396–Val-416, and Leu-420–Ala-440.

The protein belongs to the glycosyltransferase 83 family.

It localises to the cell inner membrane. The enzyme catalyses 4-amino-4-deoxy-alpha-L-arabinopyranosyl di-trans,octa-cis-undecaprenyl phosphate + lipid IVA = lipid IIA + di-trans,octa-cis-undecaprenyl phosphate.. Its pathway is lipopolysaccharide metabolism; 4-amino-4-deoxy-beta-L-arabinose-lipid A biosynthesis. Its function is as follows. Catalyzes the transfer of the L-Ara4N moiety of the glycolipid undecaprenyl phosphate-alpha-L-Ara4N to lipid A. The modified arabinose is attached to lipid A and is required for resistance to polymyxin and cationic antimicrobial peptides. The polypeptide is Undecaprenyl phosphate-alpha-4-amino-4-deoxy-L-arabinose arabinosyl transferase 1 (Pseudomonas fluorescens (strain Pf0-1)).